Reading from the N-terminus, the 257-residue chain is UPF0246 protein LPC_0782 (257 aa).

It belongs to the UPF0246 family.

The protein is UPF0246 protein LPC_0782 of Legionella pneumophila (strain Corby).